The following is a 101-amino-acid chain: Putative membrane protein insertion efficiency factor (101 aa).

This sequence belongs to the UPF0161 family.

The protein resides in the cell inner membrane. Its function is as follows. Could be involved in insertion of integral membrane proteins into the membrane. The polypeptide is Putative membrane protein insertion efficiency factor (Methylobacterium sp. (strain 4-46)).